The following is a 287-amino-acid chain: mRNA-capping enzyme regulatory subunit OPG124 (287 aa).

This sequence belongs to the orthopoxvirus mRNA-capping enzyme regulatory subunit family. In terms of assembly, interacts with the catalytic subunit OPG113.

Its subcellular location is the virion. In terms of biological role, regulatory subunit of the mRNA cap enzyme which stabilizes the catalytic subunit and enhances its methyltransferase activity through an allosteric mechanism. Heterodimeric mRNA capping enzyme catalyzes the linkage of a N7-methyl-guanosine moiety to the first transcribed nucleotide (cap 0 structure), whereas the methyltransferase OPG102 is responsible for a second methylation at the 2'-O position of the ribose (cap 1 structure). Also involved in early viral gene transcription termination and intermediate viral gene transcription initiation. Early gene transcription termination requires the termination factor VTF, the DNA-dependent ATPase NPH-I/OPG123 and the RAP94/OPG109 subunit of the viral RNA polymerase, as well as the presence of a specific termination motif. Binds, together with RAP94/OPG109, to the termination motif 5'-UUUUUNU-3' in the nascent early mRNA. The chain is mRNA-capping enzyme regulatory subunit OPG124 (OPG124) from Bos taurus (Bovine).